The sequence spans 310 residues: uncharacterized protein (310 aa).

Positions 269–307 (DLAELERKKSLAEIHKKAAMAKKREEKKKIKQELKKSAK) form a coiled coil. Residues 290–304 (KKREEKKKIKQELKK) are compositionally biased toward basic and acidic residues. A disordered region spans residues 290–310 (KKREEKKKIKQELKKSAKGKK).

This is an uncharacterized protein from Magallana gigas (Pacific oyster).